The sequence spans 303 residues: MEGIIATFRSPGAELIELGTLTVRWYGILIAISVLIGLKLSTRLGSYRNINPGIINDLMPILILSSIFGARFYYVSFEWNNYNGVNFWSKVHLLGLQIPIPSFLEIWNGGIAIHGALIMGTISIILFCRIKKQRFWDVLDVLVPSVALGQAIGRWGNFFNNEAFGLPTNQPWKLFIPFSSRPESFSDQSYFHPTFLYESLWNICIFLILIFLFRLNIRGLMKLPSGALSCIYLITYSLGRIWIEGLRIDPLCLGGSPPFCEGGLRIAQLISFLLICLGSFGLWWIYQSKRKMPNFGITRNRKK.

The next 3 membrane-spanning stretches (helical) occupy residues Leu-18–Leu-38, Ile-50–Ala-70, and Ile-106–Leu-126. Residue Arg-154 participates in a 1,2-diacyl-sn-glycero-3-phospho-(1'-sn-glycerol) binding. 3 helical membrane-spanning segments follow: residues Pro-193–Phe-213, Leu-223–Ile-243, and Ile-266–Tyr-286.

This sequence belongs to the Lgt family.

The protein localises to the cell inner membrane. It carries out the reaction L-cysteinyl-[prolipoprotein] + a 1,2-diacyl-sn-glycero-3-phospho-(1'-sn-glycerol) = an S-1,2-diacyl-sn-glyceryl-L-cysteinyl-[prolipoprotein] + sn-glycerol 1-phosphate + H(+). It participates in protein modification; lipoprotein biosynthesis (diacylglyceryl transfer). Its function is as follows. Catalyzes the transfer of the diacylglyceryl group from phosphatidylglycerol to the sulfhydryl group of the N-terminal cysteine of a prolipoprotein, the first step in the formation of mature lipoproteins. This is Phosphatidylglycerol--prolipoprotein diacylglyceryl transferase from Prochlorococcus marinus (strain SARG / CCMP1375 / SS120).